A 703-amino-acid polypeptide reads, in one-letter code: Elongation factor G (703 aa).

One can recognise a tr-type G domain in the interval 8–290 (ARYRNIGICA…AVIEYLPAPT (283 aa)). Residues 17–24 (AHVDAGKT), 88–92 (DTPGH), and 142–145 (NKMD) each bind GTP.

Belongs to the TRAFAC class translation factor GTPase superfamily. Classic translation factor GTPase family. EF-G/EF-2 subfamily.

It localises to the cytoplasm. Its function is as follows. Catalyzes the GTP-dependent ribosomal translocation step during translation elongation. During this step, the ribosome changes from the pre-translocational (PRE) to the post-translocational (POST) state as the newly formed A-site-bound peptidyl-tRNA and P-site-bound deacylated tRNA move to the P and E sites, respectively. Catalyzes the coordinated movement of the two tRNA molecules, the mRNA and conformational changes in the ribosome. This is Elongation factor G from Teredinibacter turnerae (strain ATCC 39867 / T7901).